We begin with the raw amino-acid sequence, 567 residues long: Mitogen-activated protein kinase 16 (567 aa).

Residues 25–316 (YRIEEVIGKG…AEEALADVYF (292 aa)) enclose the Protein kinase domain. ATP is bound by residues 31–39 (IGKGSYGVV) and K54. D151 serves as the catalytic Proton acceptor. Residue T187 is modified to Phosphothreonine. The short motif at 187–189 (TDY) is the TXY element. Position 189 is a phosphotyrosine (Y189). Residue T192 is modified to Phosphothreonine. Disordered stretches follow at residues 428-455 (AQQS…ADRN) and 512-567 (PAAA…SRWY). Positions 443–453 (SIRDERPRGAD) are enriched in basic and acidic residues. Over residues 545–567 (KPNTQYIPQKVSAAQDTAMSRWY) the composition is skewed to polar residues.

Belongs to the protein kinase superfamily. CMGC Ser/Thr protein kinase family. MAP kinase subfamily. Post-translationally, dually phosphorylated on Thr-187 and Tyr-189, which activates the enzyme.

It carries out the reaction L-seryl-[protein] + ATP = O-phospho-L-seryl-[protein] + ADP + H(+). The enzyme catalyses L-threonyl-[protein] + ATP = O-phospho-L-threonyl-[protein] + ADP + H(+). Activated by threonine and tyrosine phosphorylation. This is Mitogen-activated protein kinase 16 (MPK16) from Arabidopsis thaliana (Mouse-ear cress).